Consider the following 408-residue polypeptide: Tryptophan synthase beta chain (408 aa).

K103 is modified (N6-(pyridoxal phosphate)lysine).

Belongs to the TrpB family. Tetramer of two alpha and two beta chains. Requires pyridoxal 5'-phosphate as cofactor.

The enzyme catalyses (1S,2R)-1-C-(indol-3-yl)glycerol 3-phosphate + L-serine = D-glyceraldehyde 3-phosphate + L-tryptophan + H2O. Its pathway is amino-acid biosynthesis; L-tryptophan biosynthesis; L-tryptophan from chorismate: step 5/5. The beta subunit is responsible for the synthesis of L-tryptophan from indole and L-serine. The protein is Tryptophan synthase beta chain of Koribacter versatilis (strain Ellin345).